Consider the following 35-residue polypeptide: Conotoxin Cl6.16 (35 aa).

3 cysteine pairs are disulfide-bonded: cysteine 10–cysteine 22, cysteine 16–cysteine 27, and cysteine 21–cysteine 34.

In terms of tissue distribution, expressed by the venom duct.

It is found in the secreted. This chain is Conotoxin Cl6.16, found in Californiconus californicus (California cone).